Reading from the N-terminus, the 124-residue chain is ATP synthase epsilon chain (124 aa).

It belongs to the ATPase epsilon chain family. In terms of assembly, F-type ATPases have 2 components, CF(1) - the catalytic core - and CF(0) - the membrane proton channel. CF(1) has five subunits: alpha(3), beta(3), gamma(1), delta(1), epsilon(1). CF(0) has three main subunits: a, b and c.

The protein resides in the cell membrane. Functionally, produces ATP from ADP in the presence of a proton gradient across the membrane. The protein is ATP synthase epsilon chain of Corynebacterium glutamicum (strain ATCC 13032 / DSM 20300 / JCM 1318 / BCRC 11384 / CCUG 27702 / LMG 3730 / NBRC 12168 / NCIMB 10025 / NRRL B-2784 / 534).